We begin with the raw amino-acid sequence, 357 residues long: Selenide, water dikinase (357 aa).

Cys25 is a catalytic residue. ATP-binding positions include Lys28 and 57-59 (TAD). Residue Asp60 participates in Mg(2+) binding. Residues Asp77, Asp100, and 148–150 (GHS) contribute to the ATP site. Mg(2+) is bound at residue Asp100. Asp236 lines the Mg(2+) pocket.

Belongs to the selenophosphate synthase 1 family. Class I subfamily. Homodimer. Mg(2+) is required as a cofactor.

The enzyme catalyses hydrogenselenide + ATP + H2O = selenophosphate + AMP + phosphate + 2 H(+). In terms of biological role, synthesizes selenophosphate from selenide and ATP. This is Selenide, water dikinase from Pseudomonas straminea.